Here is a 99-residue protein sequence, read N- to C-terminus: uncharacterized protein (99 aa).

This is an uncharacterized protein from Mycobacterium tuberculosis (strain CDC 1551 / Oshkosh).